Consider the following 416-residue polypeptide: NADH-quinone oxidoreductase subunit H (416 aa).

A run of 9 helical transmembrane segments spans residues 16 to 36 (LILAKAVGVFVFLVLTVLAAI), 84 to 104 (PVYLLAPVISVIPAFLAFAVI), 124 to 144 (LAVAVLYILAVTSVGVYGIVL), 165 to 185 (VVSYEIAMALSFATVFLYAGT), 197 to 217 (STWYVFLLLPSFLVYVTSMVG), 260 to 280 (VSALATTMFLGGWHAPWPISL), 288 to 308 (WWPLLWFTAKVWVFLFVYIWL), 320 to 340 (FMAIGWKMLIPVSLAWIMIVA), and 353 to 373 (WASGLLIAGTVLTFGLAVVLW).

The protein belongs to the complex I subunit 1 family. In terms of assembly, NDH-1 is composed of 14 different subunits. Subunits NuoA, H, J, K, L, M, N constitute the membrane sector of the complex.

The protein resides in the cell membrane. The enzyme catalyses a quinone + NADH + 5 H(+)(in) = a quinol + NAD(+) + 4 H(+)(out). In terms of biological role, NDH-1 shuttles electrons from NADH, via FMN and iron-sulfur (Fe-S) centers, to quinones in the respiratory chain. The immediate electron acceptor for the enzyme in this species is believed to be menaquinone. Couples the redox reaction to proton translocation (for every two electrons transferred, four hydrogen ions are translocated across the cytoplasmic membrane), and thus conserves the redox energy in a proton gradient. This subunit may bind ubiquinone. This Mycobacterium sp. (strain JLS) protein is NADH-quinone oxidoreductase subunit H.